The primary structure comprises 155 residues: NADPH-dependent 7-cyano-7-deazaguanine reductase (155 aa).

Cysteine 53 (thioimide intermediate) is an active-site residue. Aspartate 60 (proton donor) is an active-site residue. Residues 75-77 (VES) and 94-95 (HE) each bind substrate.

It belongs to the GTP cyclohydrolase I family. QueF type 1 subfamily.

Its subcellular location is the cytoplasm. The enzyme catalyses 7-aminomethyl-7-carbaguanine + 2 NADP(+) = 7-cyano-7-deazaguanine + 2 NADPH + 3 H(+). It functions in the pathway tRNA modification; tRNA-queuosine biosynthesis. Functionally, catalyzes the NADPH-dependent reduction of 7-cyano-7-deazaguanine (preQ0) to 7-aminomethyl-7-deazaguanine (preQ1). The protein is NADPH-dependent 7-cyano-7-deazaguanine reductase of Brucella anthropi (strain ATCC 49188 / DSM 6882 / CCUG 24695 / JCM 21032 / LMG 3331 / NBRC 15819 / NCTC 12168 / Alc 37) (Ochrobactrum anthropi).